The primary structure comprises 285 residues: Probable endonuclease 4 (285 aa).

Zn(2+)-binding residues include His-69, His-109, Glu-145, Asp-179, His-182, His-216, Asp-229, His-231, and Glu-261.

Belongs to the AP endonuclease 2 family. The cofactor is Zn(2+).

The enzyme catalyses Endonucleolytic cleavage to 5'-phosphooligonucleotide end-products.. Endonuclease IV plays a role in DNA repair. It cleaves phosphodiester bonds at apurinic or apyrimidinic (AP) sites, generating a 3'-hydroxyl group and a 5'-terminal sugar phosphate. The chain is Probable endonuclease 4 from Salmonella typhimurium (strain LT2 / SGSC1412 / ATCC 700720).